The chain runs to 434 residues: Angio-associated migratory cell protein (434 aa).

The segment at 1–63 (MESESESGAA…EEEEEEGNEE (63 aa)) is disordered. S20 carries the phosphoserine modification. The span at 39–62 (DPDDLAQEMEDVDFEEEEEEEGNE) shows a compositional bias: acidic residues. 8 WD repeats span residues 89-129 (LHSA…LLFE), 132-171 (GHKDSVTCAGFSHDSTLVATGDMSGLLKVWQVDTKEEVWS), 173-212 (EAGDLEWMEWHPRAPVLLAGTADGNTWMWKVPNGDCKTFQ), 214-254 (PNCP…HVLK), 258-299 (GHQG…GVFR), 315-354 (SESNSVESLGFCSVMPLAAVGYLDGTLAIYDLATQTLRHQ), 356-395 (QHQSGIVQLLWEAGTAVVYTCSLDGIVRLWDARTGRLLTD), and 398-433 (GHTAEILDFALSKDASLVVTTSGDHKAKVFCVQRPD).

Expressed in metastatic melanoma, liver, skin, kidney, heart, lung, lymph node, skeletal muscle and brain, and also in A2058 melanoma cells and activated T-cells (at protein level). Expressed in blood vessels. Strongly expressed in endothelial cells, cytotrophoblasts, and poorly differentiated. colon adenocarcinoma cells found in lymphatics.

The protein resides in the cell membrane. It localises to the cytoplasm. Its function is as follows. Plays a role in angiogenesis and cell migration. In smooth muscle cell migration, may act through the RhoA pathway. The sequence is that of Angio-associated migratory cell protein (AAMP) from Homo sapiens (Human).